The primary structure comprises 470 residues: 3-isopropylmalate dehydratase large subunit (470 aa).

Residues cysteine 351, cysteine 411, and cysteine 414 each coordinate [4Fe-4S] cluster.

Belongs to the aconitase/IPM isomerase family. LeuC type 1 subfamily. Heterodimer of LeuC and LeuD. [4Fe-4S] cluster serves as cofactor.

The enzyme catalyses (2R,3S)-3-isopropylmalate = (2S)-2-isopropylmalate. The protein operates within amino-acid biosynthesis; L-leucine biosynthesis; L-leucine from 3-methyl-2-oxobutanoate: step 2/4. Catalyzes the isomerization between 2-isopropylmalate and 3-isopropylmalate, via the formation of 2-isopropylmaleate. The polypeptide is 3-isopropylmalate dehydratase large subunit (Rhodopseudomonas palustris (strain HaA2)).